Reading from the N-terminus, the 202-residue chain is Prohormone-4 (202 aa).

A signal peptide spans 1–28 (MVQRLCTSVAALSLALSACVFFPRAVMA). Positions 46 to 86 (ACRPYEPFKCPGDDTCISIQYLCDGAPDCQDGYDEDSRLCT) constitute an LDL-receptor class A domain. Cystine bridges form between C47-C61, C55-C74, and C68-C85.

The protein resides in the secreted. This is Prohormone-4 from Apis mellifera (Honeybee).